We begin with the raw amino-acid sequence, 370 residues long: tRNA/tmRNA (uracil-C(5))-methyltransferase (370 aa).

Gln190, Tyr218, Asn223, Glu239, and Asp299 together coordinate S-adenosyl-L-methionine. Cys324 functions as the Nucleophile in the catalytic mechanism. Glu358 acts as the Proton acceptor in catalysis.

This sequence belongs to the class I-like SAM-binding methyltransferase superfamily. RNA M5U methyltransferase family. TrmA subfamily.

It carries out the reaction uridine(54) in tRNA + S-adenosyl-L-methionine = 5-methyluridine(54) in tRNA + S-adenosyl-L-homocysteine + H(+). The catalysed reaction is uridine(341) in tmRNA + S-adenosyl-L-methionine = 5-methyluridine(341) in tmRNA + S-adenosyl-L-homocysteine + H(+). Its function is as follows. Dual-specificity methyltransferase that catalyzes the formation of 5-methyluridine at position 54 (m5U54) in all tRNAs, and that of position 341 (m5U341) in tmRNA (transfer-mRNA). This is tRNA/tmRNA (uracil-C(5))-methyltransferase from Sodalis glossinidius (strain morsitans).